Consider the following 222-residue polypeptide: Probable fructose-6-phosphate aldolase (222 aa).

The Schiff-base intermediate with substrate role is filled by K87.

Belongs to the transaldolase family. Type 3A subfamily.

The protein localises to the cytoplasm. The enzyme catalyses beta-D-fructose 6-phosphate = dihydroxyacetone + D-glyceraldehyde 3-phosphate. Functionally, catalyzes the reversible formation of fructose 6-phosphate from dihydroxyacetone and D-glyceraldehyde 3-phosphate via an aldolization reaction. The polypeptide is Probable fructose-6-phosphate aldolase (Streptococcus pneumoniae (strain ATCC 700669 / Spain 23F-1)).